The sequence spans 194 residues: Translation machinery-associated protein 22 (194 aa).

Positions 102–173 constitute an SUI1 domain; that stretch reads VQIKRVERNK…DVQEWLLELY (72 aa).

It belongs to the DENR family. As to quaternary structure, interacts with the 40S ribosomal subunit.

It is found in the cytoplasm. In Neosartorya fischeri (strain ATCC 1020 / DSM 3700 / CBS 544.65 / FGSC A1164 / JCM 1740 / NRRL 181 / WB 181) (Aspergillus fischerianus), this protein is Translation machinery-associated protein 22 (tma22).